The chain runs to 401 residues: Argininosuccinate synthase (401 aa).

ATP is bound by residues alanine 11–serine 19 and alanine 38. L-citrulline contacts are provided by tyrosine 89 and serine 94. Position 119 (glycine 119) interacts with ATP. 3 residues coordinate L-aspartate: threonine 121, asparagine 125, and aspartate 126. Asparagine 125 is a binding site for L-citrulline. L-citrulline is bound by residues arginine 129, serine 177, serine 186, glutamate 262, and tyrosine 274.

This sequence belongs to the argininosuccinate synthase family. Type 1 subfamily. In terms of assembly, homotetramer.

The protein localises to the cytoplasm. It carries out the reaction L-citrulline + L-aspartate + ATP = 2-(N(omega)-L-arginino)succinate + AMP + diphosphate + H(+). The protein operates within amino-acid biosynthesis; L-arginine biosynthesis; L-arginine from L-ornithine and carbamoyl phosphate: step 2/3. The sequence is that of Argininosuccinate synthase from Nitratidesulfovibrio vulgaris (strain DSM 19637 / Miyazaki F) (Desulfovibrio vulgaris).